Here is a 366-residue protein sequence, read N- to C-terminus: uncharacterized protein (366 aa).

One can recognise a CP-type G domain in the interval 59-222 (LNILHGIGET…LYDTPGIINN (164 aa)).

It belongs to the TRAFAC class YlqF/YawG GTPase family.

Binds GTP and GDP. This is an uncharacterized protein from Bacillus subtilis (strain 168).